The primary structure comprises 165 residues: Lipoprotein signal peptidase (165 aa).

4 helical membrane-spanning segments follow: residues 7-27 (FFLL…KYWI), 28-48 (THTM…LYHV), 61-81 (FSHW…FWLW), and 87-107 (DKAL…GNLI). Catalysis depends on residues D117 and D136. Residues 128–148 (SFAIFNLADTFITLGAISILI) form a helical membrane-spanning segment.

Belongs to the peptidase A8 family.

It is found in the cell inner membrane. The catalysed reaction is Release of signal peptides from bacterial membrane prolipoproteins. Hydrolyzes -Xaa-Yaa-Zaa-|-(S,diacylglyceryl)Cys-, in which Xaa is hydrophobic (preferably Leu), and Yaa (Ala or Ser) and Zaa (Gly or Ala) have small, neutral side chains.. It participates in protein modification; lipoprotein biosynthesis (signal peptide cleavage). Functionally, this protein specifically catalyzes the removal of signal peptides from prolipoproteins. This Bartonella bacilliformis (strain ATCC 35685 / KC583 / Herrer 020/F12,63) protein is Lipoprotein signal peptidase.